We begin with the raw amino-acid sequence, 34 residues long: Potassium channel toxin alpha-KTx 6.2 (34 aa).

Cystine bridges form between cysteine 3/cysteine 24, cysteine 9/cysteine 29, cysteine 13/cysteine 19, and cysteine 31/cysteine 34. At cysteine 34 the chain carries Cysteine amide.

Belongs to the short scorpion toxin superfamily. Potassium channel inhibitor family. Alpha-KTx 06 subfamily. Expressed by the venom gland.

The protein resides in the secreted. Its function is as follows. Blocks voltage-gated potassium channels Kv1.2/KCNA2 (IC(50)=0.12-0.8 nM), KCa3.1/KCNN4 (IC(50)=1-2.2 nM), Shaker B (IC(50)=2.39-80 nM), Kv1.1/KCNA1 (IC(50)=37-45 or no activity, depending on the study), Kv1.3/KCNA3 (IC(50)=150-180 or no activity, depending on the study). This chain is Potassium channel toxin alpha-KTx 6.2, found in Scorpio palmatus (Israeli golden scorpion).